The chain runs to 504 residues: MNKFDEFIESNEKDLDVDTSTRNSIISMSPVRKTGRKIRSASSNGYRLEHHRTSSAGSMHSQRLMTPTRLNDQDHPLQAKPDARRVVTRHSSVSVPNAMSKRRSLIQPMVVPTTPESQNNLPSVSHSEGSYGIPLESTTVLSSEQAMASGLRRSRNGSSQSVNSMIATTIPTNGVDVSALLQSLATKELELLECKQKIEDLKKQTQHEEQNYTRRARELHELKEQVSKHLDPSLNTPVKNRAFSPVYQNIPLESRTENAGNSSLPSSVSKPKNMGHQSTNQSRSVSPQDIQERRQRDDSSDSSKQSLWSKPLALFNQFDKIIQHEIERTLNWDDSLSGTPEVQEGTPTSNSESSAQQYDNEAPGARQKSPSQGSVSRSLWSFVSDVKAGLLGIEEENDNDVITDNRCDPVYKSDRQHEQKKSTHKITNRGQAEDSGDDSSLNTRKFKTTTKFQKDNAGNNSLTDESGHRTREKKSKRSSNKLSFIGEPDNDNSSVKNSVEMTDF.

A disordered region spans residues 32-62 (RKTGRKIRSASSNGYRLEHHRTSSAGSMHSQ). Positions 179 to 231 (ALLQSLATKELELLECKQKIEDLKKQTQHEEQNYTRRARELHELKEQVSKHLD) form a coiled coil. Thr236 is subject to Phosphothreonine. Ser244 and Ser286 each carry phosphoserine. Disordered regions lie at residues 252–306 (LESR…SKQS), 332–377 (WDDS…SVSR), and 400–504 (DVIT…MTDF). The segment covering 257-287 (ENAGNSSLPSSVSKPKNMGHQSTNQSRSVSP) has biased composition (polar residues). The segment covering 290–301 (IQERRQRDDSSD) has biased composition (basic and acidic residues). Polar residues-rich tracts occupy residues 332-359 (WDDS…QQYD) and 368-377 (KSPSQGSVSR). Residues 403–421 (TDNRCDPVYKSDRQHEQKK) are compositionally biased toward basic and acidic residues. Residues 470 to 479 (TREKKSKRSS) show a composition bias toward basic residues. Residues 491–504 (DNSSVKNSVEMTDF) are compositionally biased toward polar residues.

It belongs to the TDA11 family.

Its subcellular location is the cytoplasm. This Saccharomyces cerevisiae (strain Lalvin EC1118 / Prise de mousse) (Baker's yeast) protein is Topoisomerase I damage affected protein 11 (TDA11).